Consider the following 597-residue polypeptide: Putative Xaa-Pro dipeptidyl-peptidase (597 aa).

Catalysis depends on charge relay system residues Ser-224, Asp-336, and His-367.

Belongs to the peptidase S15 family.

The catalysed reaction is Hydrolyzes Xaa-Pro-|- bonds to release unblocked, N-terminal dipeptides from substrates including Ala-Pro-|-p-nitroanilide and (sequentially) Tyr-Pro-|-Phe-Pro-|-Gly-Pro-|-Ile.. This Bacillus anthracis protein is Putative Xaa-Pro dipeptidyl-peptidase.